Reading from the N-terminus, the 337-residue chain is Ribosomal RNA small subunit methyltransferase C (337 aa).

Belongs to the methyltransferase superfamily. RsmC family. As to quaternary structure, monomer.

The protein resides in the cytoplasm. The enzyme catalyses guanosine(1207) in 16S rRNA + S-adenosyl-L-methionine = N(2)-methylguanosine(1207) in 16S rRNA + S-adenosyl-L-homocysteine + H(+). In terms of biological role, specifically methylates the guanine in position 1207 of 16S rRNA in the 30S particle. The chain is Ribosomal RNA small subunit methyltransferase C from Proteus mirabilis (strain HI4320).